A 334-amino-acid polypeptide reads, in one-letter code: Holliday junction branch migration complex subunit RuvB (334 aa).

Residues 1-181 (MSEFLTPERT…GIILELDFYT (181 aa)) form a large ATPase domain (RuvB-L) region. The ADP site is built by L19 and R20. The ATP site is built by E26, F27, and I28. Residues F27, I28, G61, L62, G63, K64, T65, and T66 each contribute to the ADP site. ATP-binding residues include L62 and G63. ATP is bound by residues 127–129 (EDF) and R170. Y180, P216, and R217 together coordinate ADP. The tract at residues 182–255 (VKELKEIIKR…TMEVLNIDDE (74 aa)) is small ATPAse domain (RuvB-S). Position 216 (P216) interacts with ATP. A head domain (RuvB-H) region spans residues 256-334 (GLDEFDRKIL…KYEVPENRLF (79 aa)). DNA contacts are provided by R309 and R314.

The protein belongs to the RuvB family. In terms of assembly, homohexamer. Forms an RuvA(8)-RuvB(12)-Holliday junction (HJ) complex. HJ DNA is sandwiched between 2 RuvA tetramers; dsDNA enters through RuvA and exits via RuvB. An RuvB hexamer assembles on each DNA strand where it exits the tetramer. Each RuvB hexamer is contacted by two RuvA subunits (via domain III) on 2 adjacent RuvB subunits; this complex drives branch migration. In the full resolvosome a probable DNA-RuvA(4)-RuvB(12)-RuvC(2) complex forms which resolves the HJ.

It localises to the cytoplasm. The enzyme catalyses ATP + H2O = ADP + phosphate + H(+). The RuvA-RuvB-RuvC complex processes Holliday junction (HJ) DNA during genetic recombination and DNA repair, while the RuvA-RuvB complex plays an important role in the rescue of blocked DNA replication forks via replication fork reversal (RFR). RuvA specifically binds to HJ cruciform DNA, conferring on it an open structure. The RuvB hexamer acts as an ATP-dependent pump, pulling dsDNA into and through the RuvAB complex. RuvB forms 2 homohexamers on either side of HJ DNA bound by 1 or 2 RuvA tetramers; 4 subunits per hexamer contact DNA at a time. Coordinated motions by a converter formed by DNA-disengaged RuvB subunits stimulates ATP hydrolysis and nucleotide exchange. Immobilization of the converter enables RuvB to convert the ATP-contained energy into a lever motion, pulling 2 nucleotides of DNA out of the RuvA tetramer per ATP hydrolyzed, thus driving DNA branch migration. The RuvB motors rotate together with the DNA substrate, which together with the progressing nucleotide cycle form the mechanistic basis for DNA recombination by continuous HJ branch migration. Branch migration allows RuvC to scan DNA until it finds its consensus sequence, where it cleaves and resolves cruciform DNA. Its function is as follows. Promotes Holliday junction (HJ) branch migration in conjunction with RuvA. Subunits can be free, ADP- or ATP-bound; nucleotide binding changes during the reaction cycle. Has a DNA-dependent ATPase activity; dsDNA and supercoiled DNA but not ssDNA stimulate activity. This Thermotoga maritima (strain ATCC 43589 / DSM 3109 / JCM 10099 / NBRC 100826 / MSB8) protein is Holliday junction branch migration complex subunit RuvB.